The primary structure comprises 253 residues: Chloride intracellular channel protein 4 (253 aa).

Ala-2 carries the N-acetylalanine modification. The required for insertion into the membrane stretch occupies residues 2-101 (ALSMPLNGLK…EEFLEEVLCP (100 aa)). A Phosphoserine modification is found at Ser-4. At Lys-24 the chain carries N6-acetyllysine. Positions 35–38 (CPFS) match the G-site motif. The helical transmembrane segment at 37 to 57 (FSQRLFMILWLKGVVFSVTTV) threads the bilayer. Residues 81–244 (NSEVKTDVNK…PSDKEVEIAY (164 aa)) enclose the GST C-terminal domain. The residue at position 130 (Lys-130) is an N6-acetyllysine. Ser-132, Ser-167, and Ser-236 each carry phosphoserine. Tyr-244 carries the post-translational modification Phosphotyrosine.

This sequence belongs to the chloride channel CLIC family. As to quaternary structure, component of a multimeric complex consisting of several cytoskeletal proteins, including actin, ezrin, alpha-actinin, gelsolin, IQGAP1 and CLIC5A. Binds directly to brain dynamin I in a complex containing actin, tubulin and 14-3-3 isoforms. Monomer. Interacts with HRH3. Interacts with AKAP9. In terms of tissue distribution, detected in epithelial cells from colon, esophagus and kidney (at protein level). Expression is prominent in heart, kidney, placenta and skeletal muscle.

The protein resides in the cytoplasm. It is found in the cytoskeleton. The protein localises to the microtubule organizing center. Its subcellular location is the centrosome. It localises to the cytoplasmic vesicle membrane. The protein resides in the nucleus. It is found in the cell membrane. The protein localises to the mitochondrion. Its subcellular location is the cell junction. It localises to the endoplasmic reticulum membrane. It carries out the reaction chloride(in) = chloride(out). The catalysed reaction is thiocyanate(in) = thiocyanate(out). It catalyses the reaction nitrate(in) = nitrate(out). The enzyme catalyses iodide(out) = iodide(in). It carries out the reaction bromide(in) = bromide(out). The catalysed reaction is fluoride(in) = fluoride(out). It catalyses the reaction choline(out) = choline(in). Inhibited by rapamycin, amphotericin B and IAA-94. Its function is as follows. In the soluble state, catalyzes glutaredoxin-like thiol disulfide exchange reactions with reduced glutathione as electron donor. Can insert into membranes and form voltage-dependent multi-ion conductive channels. Membrane insertion seems to be redox-regulated and may occur only under oxidizing conditions. Has alternate cellular functions like a potential role in angiogenesis or in maintaining apical-basolateral membrane polarity during mitosis and cytokinesis. Could also promote endothelial cell proliferation and regulate endothelial morphogenesis (tubulogenesis). Promotes cell-surface expression of HRH3. The sequence is that of Chloride intracellular channel protein 4 from Homo sapiens (Human).